The sequence spans 919 residues: Isoleucine--tRNA ligase (919 aa).

The short motif at 57 to 67 is the 'HIGH' region element; it reads PYANGHIHIGT. Glu-553 contacts L-isoleucyl-5'-AMP. Residues 594-598 carry the 'KMSKS' region motif; the sequence is KMSKS. Position 597 (Lys-597) interacts with ATP. 4 residues coordinate Zn(2+): Cys-887, Cys-890, Cys-907, and Cys-910.

It belongs to the class-I aminoacyl-tRNA synthetase family. IleS type 1 subfamily. As to quaternary structure, monomer. Zn(2+) serves as cofactor.

It localises to the cytoplasm. The catalysed reaction is tRNA(Ile) + L-isoleucine + ATP = L-isoleucyl-tRNA(Ile) + AMP + diphosphate. Its function is as follows. Catalyzes the attachment of isoleucine to tRNA(Ile). As IleRS can inadvertently accommodate and process structurally similar amino acids such as valine, to avoid such errors it has two additional distinct tRNA(Ile)-dependent editing activities. One activity is designated as 'pretransfer' editing and involves the hydrolysis of activated Val-AMP. The other activity is designated 'posttransfer' editing and involves deacylation of mischarged Val-tRNA(Ile). This Thermotoga maritima (strain ATCC 43589 / DSM 3109 / JCM 10099 / NBRC 100826 / MSB8) protein is Isoleucine--tRNA ligase.